Reading from the N-terminus, the 589-residue chain is WD repeat-containing protein 26 homolog (589 aa).

Residues 1 to 57 form a disordered region; that stretch reads MGVVEDTEPPLKRAKRLADEPNGFSANSSVRGSSVNSNSLGDLMARPLPSQGDDETI. Positions 25-39 are enriched in low complexity; that stretch reads SANSSVRGSSVNSNS. In terms of domain architecture, LisH spans 64–96; sequence RKSEFVRIITRALYSLGYDKTGAMLEEESGISL. The region spanning 97 to 154 is the CTLH domain; that stretch reads HNSTIKLFLQQVKDGKWDQSVKTLHRIGFPDEKAVKAASFLLLEQKFLEFLKVEKIAD. 7 WD repeats span residues 272 to 311, 317 to 358, 360 to 398, 401 to 440, 442 to 480, 484 to 526, and 529 to 569; these read SHTD…HISL, GHHK…HMYE, GGIS…KECW, QRTQ…ERLI, EEDM…KIVS, GHKR…LIVE, and GHAG…QQNQ.

In terms of assembly, interacts with RANBPM. In terms of tissue distribution, expressed in roots, leaves and flowers.

The protein localises to the cytoplasm. In terms of biological role, acts as a component involved in the crosstalk regulation between light, hormone and abiotic stress response. This is WD repeat-containing protein 26 homolog from Arabidopsis thaliana (Mouse-ear cress).